A 326-amino-acid chain; its full sequence is Putative HTH-type transcriptional regulatory protein MmarC5_0898 (326 aa).

One can recognise an HTH cro/C1-type domain in the interval 128–183 (LRETREKLKISVGELAEISRVSRKTIYKYEQNEANPSAEVAIKIEEYLDVPLIKGI). The segment at residues 139-158 (VGELAEISRVSRKTIYKYEQ) is a DNA-binding region (H-T-H motif).

The sequence is that of Putative HTH-type transcriptional regulatory protein MmarC5_0898 from Methanococcus maripaludis (strain C5 / ATCC BAA-1333).